We begin with the raw amino-acid sequence, 385 residues long: Cytochrome b (385 aa).

The Mitochondrial matrix segment spans residues 1 to 27 (MAFRKSNVYLSLVNSYIIDSPQPSSIN). Y16 contacts a ubiquinone. Residues 28–51 (YWWNMGSLLGLCLVIQIVTGIFMA) form a helical membrane-spanning segment. Residues 52–74 (MHYSSNIELAFSSVEHIMRDVHN) are Mitochondrial intermembrane-facing. A helical membrane pass occupies residues 75 to 102 (GYILRYLHANGASFFFMVMFMHMAKGLY). Heme b-binding residues include H82 and H96. At 103–110 (YGSYRSPR) the chain is on the mitochondrial matrix side. The chain crosses the membrane as a helical span at residues 111–135 (VTLWNVGVIIFILTIATAFLGYCCV). Topologically, residues 136–172 (YGQMSHWGATVITNLFSAIPFVGNDIVSWLWGGFSVS) are mitochondrial intermembrane. The chain crosses the membrane as a helical span at residues 173–204 (NPTIQRFFALHYLVPFIIAAMVIMHLMALHIH). H183 and H197 together coordinate heme b. H202 is a binding site for a ubiquinone. Residues 205–223 (GSSNPLGITGNLDRIPMHS) are Mitochondrial matrix-facing. The helical transmembrane segment at 224-246 (YFIFKDLVTVFLFMLILALFVFY) threads the bilayer. Residues 247 to 287 (SPNTLGHPDNYIPGNPLVTPASIVPEWYLLPFYAILRSIPD) lie on the Mitochondrial intermembrane side of the membrane. The helical transmembrane segment at 288 to 308 (KLLGVITMFAAILVLLVLPFT) threads the bilayer. At 309 to 319 (DRSVVRGNTFK) the chain is on the mitochondrial matrix side. The helical transmembrane segment at 320–340 (VLSKFFFFIFVFNFVLLGQIG) threads the bilayer. Over 341-347 (ACHVEVP) the chain is Mitochondrial intermembrane. The helical transmembrane segment at 348 to 364 (YVLMGQIATFIYFAYFL) threads the bilayer. The Mitochondrial matrix portion of the chain corresponds to 365-385 (IIVPVISTIENVLFYIGRVNK).

This sequence belongs to the cytochrome b family. As to quaternary structure, component of the ubiquinol-cytochrome c oxidoreductase (cytochrome b-c1 complex, complex III, CIII), a multisubunit enzyme composed of 10 subunits. The complex is composed of 3 respiratory subunits cytochrome b (COB), cytochrome c1 (CYT1) and Rieske protein (RIP1), 2 core protein subunits COR1 and QCR2, and 5 low-molecular weight protein subunits QCR6, QCR7, QCR8, QCR9 and QCR10. The complex exists as an obligatory dimer and forms supercomplexes (SCs) in the inner mitochondrial membrane with a monomer or a dimer of cytochrome c oxidase (complex IV, CIV), resulting in 2 different assemblies (supercomplexes III(2)IV and III(2)IV(2)). Heme b is required as a cofactor.

Its subcellular location is the mitochondrion inner membrane. The catalysed reaction is a quinol + 2 Fe(III)-[cytochrome c](out) = a quinone + 2 Fe(II)-[cytochrome c](out) + 2 H(+)(out). In terms of biological role, component of the ubiquinol-cytochrome c oxidoreductase, a multisubunit transmembrane complex that is part of the mitochondrial electron transport chain which drives oxidative phosphorylation. The respiratory chain contains 3 multisubunit complexes succinate dehydrogenase (complex II, CII), ubiquinol-cytochrome c oxidoreductase (cytochrome b-c1 complex, complex III, CIII) and cytochrome c oxidase (complex IV, CIV), that cooperate to transfer electrons derived from NADH and succinate to molecular oxygen, creating an electrochemical gradient over the inner membrane that drives transmembrane transport and the ATP synthase. The cytochrome b-c1 complex catalyzes electron transfer from ubiquinol to cytochrome c, linking this redox reaction to translocation of protons across the mitochondrial inner membrane, with protons being carried across the membrane as hydrogens on the quinol. In the process called Q cycle, 2 protons are consumed from the matrix, 4 protons are released into the intermembrane space and 2 electrons are passed to cytochrome c. Cytochrome b is a catalytic core subunit containing 2 b-type hemes BL and BH topographically segregated in the quinone reduction (Qi) and quinol oxidation (Q0) sites on opposite sides of the membrane. The protein is Cytochrome b (COB) of Saccharomyces cerevisiae (strain ATCC 204508 / S288c) (Baker's yeast).